The sequence spans 240 residues: uncharacterized protein (240 aa).

The C2H2-type zinc-finger motif lies at 3-27 (LKCLECDKLLSSIEMAEFHSTKTSH). Disordered stretches follow at residues 21–43 (HSTK…RSPE) and 120–171 (AEIE…RFSI). Positions 120-136 (AEIERDKKRRAAERENK) are enriched in basic and acidic residues. Positions 155-166 (SSSTCTRTPPTS) are enriched in low complexity.

This is an uncharacterized protein from Schizosaccharomyces pombe (strain 972 / ATCC 24843) (Fission yeast).